The primary structure comprises 567 residues: Proline--tRNA ligase (567 aa).

Belongs to the class-II aminoacyl-tRNA synthetase family. ProS type 1 subfamily. In terms of assembly, homodimer.

It localises to the cytoplasm. It catalyses the reaction tRNA(Pro) + L-proline + ATP = L-prolyl-tRNA(Pro) + AMP + diphosphate. In terms of biological role, catalyzes the attachment of proline to tRNA(Pro) in a two-step reaction: proline is first activated by ATP to form Pro-AMP and then transferred to the acceptor end of tRNA(Pro). As ProRS can inadvertently accommodate and process non-cognate amino acids such as alanine and cysteine, to avoid such errors it has two additional distinct editing activities against alanine. One activity is designated as 'pretransfer' editing and involves the tRNA(Pro)-independent hydrolysis of activated Ala-AMP. The other activity is designated 'posttransfer' editing and involves deacylation of mischarged Ala-tRNA(Pro). The misacylated Cys-tRNA(Pro) is not edited by ProRS. This chain is Proline--tRNA ligase, found in Campylobacter curvus (strain 525.92).